We begin with the raw amino-acid sequence, 358 residues long: MQFVALLAALGAPLALAASIPAAHNNSSIIDVKLAATGNSMIKAIITNNGDRTLNLLKFNTIMDEHPTRKVKVYQDGAEVQFTGMLPRYKMSDLTPDFFVNLGPKASVEHSFDLAATHDLSRGGKITVSANGVVPTAEENETTITGHTHYESNELTMDVDGKEAAAVEQSMGGDSPAGVIDKRSNIVTSSCRGNQLQMLKTALANSARLSKAAASAAQRNPRKFQEYFKTTDSSTVQKVVSRFMSVARESTSTGKTTYYCNDTRDGCKPGVLAYTLPSKNQVFNCPSYYKLPALNNRCHGQDMATTTLHELTHNPAVVTPFCEDLGYGYDRVSRLPASKAVQNADTYSLFANAVYLGC.

The first 17 residues, 1–17 (MQFVALLAALGAPLALA), serve as a signal peptide directing secretion. Positions 18 to 183 (ASIPAAHNNS…DSPAGVIDKR (166 aa)) are excised as a propeptide. 2 cysteine pairs are disulfide-bonded: Cys-191-Cys-260 and Cys-267-Cys-285. Position 309 (His-309) interacts with Zn(2+). Residue Glu-310 is part of the active site. Residues His-313 and Asp-324 each coordinate Zn(2+).

It belongs to the peptidase M35 family. The cofactor is Zn(2+).

Its subcellular location is the secreted. The catalysed reaction is Preferential cleavage of bonds with hydrophobic residues in P1'. Also 3-Asn-|-Gln-4 and 8-Gly-|-Ser-9 bonds in insulin B chain.. Its function is as follows. Secreted metalloproteinase that allows assimilation of proteinaceous substrates. Shows high activities on basic nuclear substrates such as histone and protamine. May be involved in virulence. The protein is Neutral protease 2 homolog MGYG_02351 of Arthroderma gypseum (strain ATCC MYA-4604 / CBS 118893) (Microsporum gypseum).